Here is a 43-residue protein sequence, read N- to C-terminus: Snaclec lebecetin subunit beta (43 aa).

Residues 1-43 (ALNCASGWSGGYDQHCYKVFDIPPSWAADEKFCKQQTSGGHLV) enclose the C-type lectin domain. Residues C4 and C16 are joined by a disulfide bond.

As to quaternary structure, heterodimer of subunits alpha and beta; disulfide-linked. Requires Ca(2+) as cofactor. Post-translationally, glycosylated. In terms of tissue distribution, expressed by the venom gland.

The protein resides in the secreted. Binds to the platelet GPIb/IX/V receptor system and inhibits ristocetin-induced platelet aggregation in human platelet-rich plasma. Strongly inhibits platelet aggregation induced by ADP, calcium ionophore, thrombin and collagen. Does not inhibit U46619-induced platelet aggregation. This chain is Snaclec lebecetin subunit beta, found in Macrovipera lebetinus (Levantine viper).